Consider the following 404-residue polypeptide: Sodium/glutamate symporter (404 aa).

Helical transmembrane passes span 5-25 (FSTY…YFLV), 33-53 (TFNI…LLIW), 69-89 (TTMM…SRLI), 95-115 (LVVF…IGIA), 161-181 (IAIA…GPVA), 219-239 (SLIE…YLDV), 245-265 (ALQL…RNIL), 277-297 (AIDV…LMSL), 307-327 (IDVL…AIFI), 338-358 (AVVL…TAIA), and 373-393 (AFLI…AALL).

Belongs to the glutamate:Na(+) symporter (ESS) (TC 2.A.27) family.

Its subcellular location is the cell inner membrane. In terms of biological role, catalyzes the sodium-dependent transport of glutamate. The polypeptide is Sodium/glutamate symporter (Haemophilus influenzae (strain ATCC 51907 / DSM 11121 / KW20 / Rd)).